We begin with the raw amino-acid sequence, 86 residues long: Beta-toxin To4 (86 aa).

The first 20 residues, 1–20 (MTRFVLFISCFFLIGMIVEC), serve as a signal peptide directing secretion. Residues 21-83 (KDGYLMEYGG…IWNRATNKCG (63 aa)) enclose the LCN-type CS-alpha/beta domain. Cystine bridges form between cysteine 31–cysteine 82, cysteine 35–cysteine 57, cysteine 43–cysteine 63, and cysteine 47–cysteine 65. Residue cysteine 82 is modified to Cysteine amide.

Belongs to the long (4 C-C) scorpion toxin superfamily. Sodium channel inhibitor family. Beta subfamily. Expressed by the venom gland.

Its subcellular location is the secreted. Its function is as follows. Beta toxins bind voltage-independently at site-4 of sodium channels (Nav) and shift the voltage of activation toward more negative potentials thereby affecting sodium channel activation and promoting spontaneous and repetitive firing. This toxin shows moderate inhibition of Nav1.1/SCN1A, Nav1.2/SCN2A, and Nav1.4/SCN4A, and promotes a left voltage shift on these channels. It exhibits similar potency on Nav1.2/SCN2A and Nav1.4/SCN4A (40-50% peak current inhibition at 0.5 uM), and weaker inhibition on Nav1.2 (20-30% peak current inhibition at 0.5 uM). This is Beta-toxin To4 from Tityus obscurus (Amazonian scorpion).